Consider the following 101-residue polypeptide: Small ribosomal subunit protein bS18c (101 aa).

Belongs to the bacterial ribosomal protein bS18 family. As to quaternary structure, part of the 30S ribosomal subunit.

Its subcellular location is the plastid. It is found in the chloroplast. The sequence is that of Small ribosomal subunit protein bS18c from Lepidium virginicum (Virginia pepperweed).